Reading from the N-terminus, the 298-residue chain is Nucleotide-binding protein Csal_2229 (298 aa).

Glycine 8 to serine 15 contributes to the ATP binding site. Aspartate 59–asparagine 62 is a binding site for GTP.

It belongs to the RapZ-like family.

Displays ATPase and GTPase activities. The sequence is that of Nucleotide-binding protein Csal_2229 from Chromohalobacter salexigens (strain ATCC BAA-138 / DSM 3043 / CIP 106854 / NCIMB 13768 / 1H11).